The chain runs to 192 residues: Ion-translocating oxidoreductase complex subunit A (192 aa).

Transmembrane regions (helical) follow at residues 5-25, 39-59, 63-83, 102-122, 134-154, and 171-191; these read ILLIISTALINNFVLVKFLGL, IGMSLATMFVLTVASISAYLI, ILTPLSATFLRTLVFILVIAV, LLGIFLPLITTNCAVLGVALL, VIYGFGASLGFGLVLVLFAAL, and SIALITAGLMSLAFMGFTGLV.

It belongs to the NqrDE/RnfAE family. The complex is composed of six subunits: RnfA, RnfB, RnfC, RnfD, RnfE and RnfG.

The protein resides in the cell inner membrane. Functionally, part of a membrane-bound complex that couples electron transfer with translocation of ions across the membrane. The chain is Ion-translocating oxidoreductase complex subunit A from Pasteurella multocida (strain Pm70).